A 452-amino-acid chain; its full sequence is Probable glycine dehydrogenase (decarboxylating) subunit 1 (452 aa).

This sequence belongs to the GcvP family. N-terminal subunit subfamily. As to quaternary structure, the glycine cleavage system is composed of four proteins: P, T, L and H. In this organism, the P 'protein' is a heterodimer of two subunits.

It catalyses the reaction N(6)-[(R)-lipoyl]-L-lysyl-[glycine-cleavage complex H protein] + glycine + H(+) = N(6)-[(R)-S(8)-aminomethyldihydrolipoyl]-L-lysyl-[glycine-cleavage complex H protein] + CO2. In terms of biological role, the glycine cleavage system catalyzes the degradation of glycine. The P protein binds the alpha-amino group of glycine through its pyridoxal phosphate cofactor; CO(2) is released and the remaining methylamine moiety is then transferred to the lipoamide cofactor of the H protein. The polypeptide is Probable glycine dehydrogenase (decarboxylating) subunit 1 (Novosphingobium aromaticivorans (strain ATCC 700278 / DSM 12444 / CCUG 56034 / CIP 105152 / NBRC 16084 / F199)).